Here is a 384-residue protein sequence, read N- to C-terminus: Spermidine/putrescine import ATP-binding protein PotA (384 aa).

One can recognise an ABC transporter domain in the interval 6 to 238; sequence IAFQNVSKVF…PINHFVATFI (233 aa). Position 40–47 (40–47) interacts with ATP; that stretch reads GASGSGKS.

Belongs to the ABC transporter superfamily. Spermidine/putrescine importer (TC 3.A.1.11.1) family. In terms of assembly, the complex is composed of two ATP-binding proteins (PotA), two transmembrane proteins (PotB and PotC) and a solute-binding protein (PotD).

The protein localises to the cell membrane. It catalyses the reaction ATP + H2O + polyamine-[polyamine-binding protein]Side 1 = ADP + phosphate + polyamineSide 2 + [polyamine-binding protein]Side 1.. In terms of biological role, part of the ABC transporter complex PotABCD involved in spermidine/putrescine import. Responsible for energy coupling to the transport system. This chain is Spermidine/putrescine import ATP-binding protein PotA, found in Streptococcus thermophilus (strain ATCC BAA-250 / LMG 18311).